A 612-amino-acid polypeptide reads, in one-letter code: Elongation factor 4 (612 aa).

Positions 11-193 (NHIRNFSIVA…KIVTDIPAPS (183 aa)) constitute a tr-type G domain. GTP-binding positions include 23 to 28 (DHGKST) and 140 to 143 (NKID).

Belongs to the TRAFAC class translation factor GTPase superfamily. Classic translation factor GTPase family. LepA subfamily.

The protein localises to the cell membrane. It carries out the reaction GTP + H2O = GDP + phosphate + H(+). Required for accurate and efficient protein synthesis under certain stress conditions. May act as a fidelity factor of the translation reaction, by catalyzing a one-codon backward translocation of tRNAs on improperly translocated ribosomes. Back-translocation proceeds from a post-translocation (POST) complex to a pre-translocation (PRE) complex, thus giving elongation factor G a second chance to translocate the tRNAs correctly. Binds to ribosomes in a GTP-dependent manner. This chain is Elongation factor 4, found in Lactobacillus acidophilus (strain ATCC 700396 / NCK56 / N2 / NCFM).